A 123-amino-acid chain; its full sequence is Large ribosomal subunit protein bL12 (123 aa).

Belongs to the bacterial ribosomal protein bL12 family. As to quaternary structure, homodimer. Part of the ribosomal stalk of the 50S ribosomal subunit. Forms a multimeric L10(L12)X complex, where L10 forms an elongated spine to which 2 to 4 L12 dimers bind in a sequential fashion. Binds GTP-bound translation factors.

Functionally, forms part of the ribosomal stalk which helps the ribosome interact with GTP-bound translation factors. Is thus essential for accurate translation. The chain is Large ribosomal subunit protein bL12 from Chromobacterium violaceum (strain ATCC 12472 / DSM 30191 / JCM 1249 / CCUG 213 / NBRC 12614 / NCIMB 9131 / NCTC 9757 / MK).